Here is a 902-residue protein sequence, read N- to C-terminus: Chitin synthase 3 (902 aa).

A compositionally biased stretch (basic and acidic residues) spans 1–15 (MAYNRLDDDYFDNRR). A disordered region spans residues 1–68 (MAYNRLDDDY…MGPGRHTPSD (68 aa)). Pro residues predominate over residues 19–30 (NRPPPHRTPSPG). Residue Asn-80 is glycosylated (N-linked (GlcNAc...) asparagine). A disordered region spans residues 104 to 161 (HHDAYYNPTYTPTPNEAQTPYGEPGYEHDGRPLLPQQDSYGQYSDNPQQQQQQQGGLK). Composition is skewed to polar residues over residues 111–121 (PTYTPTPNEAQ) and 139–150 (QQDSYGQYSDNP). The next 9 helical transmembrane spans lie at 449-469 (SAFGFISVLPGAFSAYRYIAL), 547-567 (RWLNGSFFAAIYAIAHFYQFF), 577-597 (IAFFIEFTFNTVNMIFAWFAI), 623-643 (ILGVCFEWLYGVSLITCFVLA), 656-676 (LAMIYFWAIIFCYLLFAAVFI), 699-719 (VVVTLILSIMSTYGIWLVASL), 731-751 (LVQYMLLSPTFTNVLNVYAFC), 830-850 (VVVLLWMVTNFGLAAVVLSTA), and 874-894 (VVLYSVAALSGFKFIGAMWFL).

This sequence belongs to the chitin synthase family. Class II subfamily.

Its subcellular location is the cell membrane. The catalysed reaction is [(1-&gt;4)-N-acetyl-beta-D-glucosaminyl](n) + UDP-N-acetyl-alpha-D-glucosamine = [(1-&gt;4)-N-acetyl-beta-D-glucosaminyl](n+1) + UDP + H(+). Functionally, polymerizes chitin, a structural polymer of the cell wall and septum, by transferring the sugar moiety of UDP-GlcNAc to the non-reducing end of the growing chitin polymer. CHS1 and CHS3 have compensatory functions in cell wall modifications in responses to stresses. Might function as a negative regulator on expression of other CHS genes. The polypeptide is Chitin synthase 3 (Pyricularia oryzae (strain 70-15 / ATCC MYA-4617 / FGSC 8958) (Rice blast fungus)).